We begin with the raw amino-acid sequence, 202 residues long: Small ribosomal subunit protein uS4c (202 aa).

The S4 RNA-binding domain occupies 90-152; that stretch reads MRLDNLIFRL…AASKSLVNTY (63 aa).

It belongs to the universal ribosomal protein uS4 family. Part of the 30S ribosomal subunit. Contacts protein S5. The interaction surface between S4 and S5 is involved in control of translational fidelity.

It localises to the plastid. The protein resides in the chloroplast. One of the primary rRNA binding proteins, it binds directly to 16S rRNA where it nucleates assembly of the body of the 30S subunit. In terms of biological role, with S5 and S12 plays an important role in translational accuracy. The sequence is that of Small ribosomal subunit protein uS4c (rps4) from Emiliania huxleyi (Coccolithophore).